Consider the following 398-residue polypeptide: Phosphoglycerate kinase (398 aa).

Substrate is bound by residues 21 to 23, arginine 36, 59 to 62, arginine 119, and arginine 157; these read DFN and HLGR. ATP-binding positions include lysine 208, glycine 296, glutamate 327, and 354–357; that span reads GGDS.

Belongs to the phosphoglycerate kinase family. As to quaternary structure, monomer.

It localises to the cytoplasm. The enzyme catalyses (2R)-3-phosphoglycerate + ATP = (2R)-3-phospho-glyceroyl phosphate + ADP. It participates in carbohydrate degradation; glycolysis; pyruvate from D-glyceraldehyde 3-phosphate: step 2/5. The sequence is that of Phosphoglycerate kinase from Streptococcus equi subsp. zooepidemicus (strain MGCS10565).